The chain runs to 443 residues: MESLASLYKNHIATLQERTRDALARFKLDALLIHSGELFNVFLDDHPYPFKVNPQFKAWVPVTQVPNCWLLVDGVNKPKLWFYLPVDYWHNVEPLPNSFWTEDVEVIALPKADGIGSLLPAARGNIGYIGPVPERALQLGIEASNINPKGVIDYLHYYRSFKTEYELACMREAQKMAVNGHRAAEEAFRSGMSEFDINIAYLTATGHRDTDVPYSNIVALNEHAAVLHYTKLDHQAPEEMRSFLLDAGAEYNGYAADLTRTWSAKSDNDYAQLVKDVNDEQLALIATMKAGVSYVDYHIQFHQRIAKLLRKHQIITDMSEEAMVENDLTGPFMPHGIGHPLGLQVHDVAGFMQDDSGTHLAAPARYPYLRCTRILQPGMVLTIEPGIYFIESLLAPWREGQFSKHFNWQKIEALKPFGGIRIEDNVVIHENNVENMTRDLKLA.

Residues Asp246, Asp257, His339, Glu384, and Glu423 each contribute to the Mn(2+) site.

The protein belongs to the peptidase M24B family. Bacterial-type prolidase subfamily. It depends on Mn(2+) as a cofactor.

It catalyses the reaction Xaa-L-Pro dipeptide + H2O = an L-alpha-amino acid + L-proline. Its function is as follows. Splits dipeptides with a prolyl residue in the C-terminal position. The chain is Xaa-Pro dipeptidase from Escherichia coli O81 (strain ED1a).